Here is a 188-residue protein sequence, read N- to C-terminus: Protein YecM (188 aa).

The protein to H.influenzae HI_1582/HI_1581.

In Escherichia coli (strain K12), this protein is Protein YecM (yecM).